A 189-amino-acid chain; its full sequence is Small ribosomal subunit protein uS5 (189 aa).

Residues 22–85 (LIDKLVTINR…ERAKRGMIRV (64 aa)) enclose the S5 DRBM domain. A disordered region spans residues 164–189 (SVASRRGKKVADLFGPKREKEAPADV). Positions 172–189 (KVADLFGPKREKEAPADV) are enriched in basic and acidic residues.

It belongs to the universal ribosomal protein uS5 family. As to quaternary structure, part of the 30S ribosomal subunit. Contacts proteins S4 and S8.

With S4 and S12 plays an important role in translational accuracy. Its function is as follows. Located at the back of the 30S subunit body where it stabilizes the conformation of the head with respect to the body. The sequence is that of Small ribosomal subunit protein uS5 from Acidiphilium cryptum (strain JF-5).